We begin with the raw amino-acid sequence, 259 residues long: Type III pantothenate kinase (259 aa).

6 to 13 (DVGNTNCT) contributes to the ATP binding site. 107 to 110 (GSDR) serves as a coordination point for substrate. Asp109 serves as the catalytic Proton acceptor. Residue Asp129 participates in K(+) binding. Thr132 provides a ligand contact to ATP. Residue Thr184 participates in substrate binding.

Belongs to the type III pantothenate kinase family. As to quaternary structure, homodimer. Requires NH4(+) as cofactor. The cofactor is K(+).

It localises to the cytoplasm. It carries out the reaction (R)-pantothenate + ATP = (R)-4'-phosphopantothenate + ADP + H(+). Its pathway is cofactor biosynthesis; coenzyme A biosynthesis; CoA from (R)-pantothenate: step 1/5. Its function is as follows. Catalyzes the phosphorylation of pantothenate (Pan), the first step in CoA biosynthesis. The polypeptide is Type III pantothenate kinase (Listeria innocua serovar 6a (strain ATCC BAA-680 / CLIP 11262)).